The chain runs to 320 residues: Aurora kinase B (320 aa).

Residues 1-10 are compositionally biased toward basic and acidic residues; it reads MQNKENREPR. The interval 1 to 38 is disordered; sequence MQNKENREPRVQQTPSAGVGPLRVEMNPDTHAVSGPGR. The region spanning 53–303 is the Protein kinase domain; that stretch reads FDIGRPLGKG…LRSVMEHPWV (251 aa). ATP is bound by residues 59–67 and K82; that span reads LGKGKFGNV. Catalysis depends on D176, which acts as the Proton acceptor.

Belongs to the protein kinase superfamily. Ser/Thr protein kinase family. Aurora subfamily. In terms of assembly, component of the chromosomal passenger complex (CPC).

The protein localises to the nucleus. Its subcellular location is the chromosome. The protein resides in the centromere. It localises to the cytoplasm. It is found in the cytoskeleton. The protein localises to the spindle. Its subcellular location is the midbody. The enzyme catalyses L-seryl-[protein] + ATP = O-phospho-L-seryl-[protein] + ADP + H(+). It carries out the reaction L-threonyl-[protein] + ATP = O-phospho-L-threonyl-[protein] + ADP + H(+). With respect to regulation, kinase activity is stimulated by cell-cycle specific phosphorylation. In terms of biological role, serine/threonine-protein kinase component of the chromosomal passenger complex (CPC), a complex that acts as a key regulator of mitosis. The CPC complex has essential functions at the centromere in ensuring correct chromosome alignment and segregation and is required for chromatin-induced microtubule stabilization and spindle assembly. Involved in the bipolar attachment of spindle microtubules to kinetochores and is a key regulator for the onset of cytokinesis during mitosis. Required for central/midzone spindle assembly and cleavage furrow formation. Key component of the cytokinesis checkpoint, a process required to delay abscission to prevent both premature resolution of intercellular chromosome bridges and accumulation of DNA damage. Phosphorylates 'Ser-10' of histone H3 during mitosis. This is Aurora kinase B (aurkb) from Danio rerio (Zebrafish).